Here is a 545-residue protein sequence, read N- to C-terminus: Alpha-galactosidase A (545 aa).

The signal sequence occupies residues 1–31 (MIQGLESIMNQGTKRILLAATLAATPWQVYG). A disulfide bond links Cys-54 and Cys-86. Residues Asn-57, Asn-95, Asn-101, and Asn-131 are each glycosylated (N-linked (GlcNAc...) asparagine). Cys-134 and Cys-164 form a disulfide bridge. Catalysis depends on Asp-162, which acts as the Nucleophile. N-linked (GlcNAc...) asparagine glycosylation is present at Asn-211. Asp-220 (proton donor) is an active-site residue. N-linked (GlcNAc...) asparagine glycosylation is found at Asn-363 and Asn-444. The 98-residue stretch at 421 to 518 (CSSVVPTGLV…KNAKTDGCLT (98 aa)) folds into the Ricin B-type lectin domain. Disulfide bonds link Cys-438–Cys-452 and Cys-477–Cys-490.

The protein belongs to the glycosyl hydrolase 27 family. Post-translationally, a C-terminal Ser/Thr-rich region may provide possible sites for O-glycosylation.

The protein resides in the secreted. It carries out the reaction Hydrolysis of terminal, non-reducing alpha-D-galactose residues in alpha-D-galactosides, including galactose oligosaccharides, galactomannans and galactolipids.. In terms of biological role, hydrolyzes a variety of simple alpha-D-galactoside as well as more complex molecules such as oligosaccharides and polysaccharides. The chain is Alpha-galactosidase A (aglA) from Aspergillus niger.